The following is a 672-amino-acid chain: Probable urocanate hydratase (672 aa).

NAD(+) is bound by residues 128 to 129 (GG), Gln206, 253 to 255 (GMS), Glu273, 318 to 319 (NV), 340 to 344 (QTSLH), 351 to 352 (YY), Tyr400, and Gly592.

This sequence belongs to the urocanase family. Requires NAD(+) as cofactor.

It catalyses the reaction 4-imidazolone-5-propanoate = trans-urocanate + H2O. The protein operates within amino-acid degradation; L-histidine degradation into L-glutamate; N-formimidoyl-L-glutamate from L-histidine: step 2/3. The sequence is that of Probable urocanate hydratase (uroc1) from Dictyostelium discoideum (Social amoeba).